Consider the following 83-residue polypeptide: Small cysteine-rich protein 3 (83 aa).

An N-terminal signal peptide occupies residues 1–21 (MGVKLNICLLLLLVAIISSQG). Positions 22-39 (FNLRKKEDSKDEKPFGNY) are excised as a propeptide. Over residues 25 to 35 (RKKEDSKDEKP) the composition is skewed to basic and acidic residues. A disordered region spans residues 25–44 (RKKEDSKDEKPFGNYRRGSP).

Belongs to the Cnidaria small cysteine-rich protein (SCRiP) family. alpha subfamily. Contains 4 disulfide bonds.

It localises to the secreted. The protein localises to the nematocyst. Its function is as follows. This recombinant protein induces severe neurotoxicity on zebrafish larvae (Danio rerio) at a concentration of 230 mg/ml, but does not show toxicity when injected in blowfly larvae (Sarcophaga falculata). All fish incubated with this protein died within 16 hours of exposure. Has also been claimed to be implied in calcification, but this function seems improbable. This Acropora millepora (Staghorn coral) protein is Small cysteine-rich protein 3.